The sequence spans 246 residues: Ribonuclease PH (246 aa).

Residues Arg86 and Gly124–Arg126 each bind phosphate.

The protein belongs to the RNase PH family. In terms of assembly, homohexameric ring arranged as a trimer of dimers.

The enzyme catalyses tRNA(n+1) + phosphate = tRNA(n) + a ribonucleoside 5'-diphosphate. Functionally, phosphorolytic 3'-5' exoribonuclease that plays an important role in tRNA 3'-end maturation. Removes nucleotide residues following the 3'-CCA terminus of tRNAs; can also add nucleotides to the ends of RNA molecules by using nucleoside diphosphates as substrates, but this may not be physiologically important. Probably plays a role in initiation of 16S rRNA degradation (leading to ribosome degradation) during starvation. This Bacillus licheniformis (strain ATCC 14580 / DSM 13 / JCM 2505 / CCUG 7422 / NBRC 12200 / NCIMB 9375 / NCTC 10341 / NRRL NRS-1264 / Gibson 46) protein is Ribonuclease PH.